Consider the following 371-residue polypeptide: tRNA-specific 2-thiouridylase MnmA (371 aa).

Residues 12–19 (GMSGGVDS) and methionine 38 each bind ATP. The interval 98–100 (NPD) is interaction with target base in tRNA. Residue cysteine 103 is the Nucleophile of the active site. Cysteines 103 and 200 form a disulfide. Glycine 128 provides a ligand contact to ATP. The interval 150 to 152 (KDQ) is interaction with tRNA. Residue cysteine 200 is the Cysteine persulfide intermediate of the active site. The tract at residues 312 to 313 (RY) is interaction with tRNA.

It belongs to the MnmA/TRMU family. In terms of assembly, interacts with TusE.

It is found in the cytoplasm. It carries out the reaction S-sulfanyl-L-cysteinyl-[protein] + uridine(34) in tRNA + AH2 + ATP = 2-thiouridine(34) in tRNA + L-cysteinyl-[protein] + A + AMP + diphosphate + H(+). In terms of biological role, catalyzes the 2-thiolation of uridine at the wobble position (U34) of tRNA(Lys), tRNA(Glu) and tRNA(Gln), leading to the formation of s(2)U34, the first step of tRNA-mnm(5)s(2)U34 synthesis. Sulfur is provided by IscS, via a sulfur-relay system. Binds ATP and its substrate tRNAs. In Yersinia pestis bv. Antiqua (strain Antiqua), this protein is tRNA-specific 2-thiouridylase MnmA.